The following is a 580-amino-acid chain: Mucolipin-1 (580 aa).

The disordered stretch occupies residues Met1–Glu38. Residues Met1–Lys65 lie on the Cytoplasmic side of the membrane. Phosphoserine is present on Ser10. A Dileucine motif; mediates targeting to lysosomes motif is present at residues Glu11–Leu16. Residues Arg42–Lys62 form an interaction with phosphoinositides region. The helical transmembrane segment at Leu66–Ser86 threads the bilayer. Topologically, residues Asn87–Arg298 are extracellular. An extracellular/lumenal pore loop region spans residues Leu107–Thr121. A disulfide bridge links Cys166 with Cys192. Asn230 carries N-linked (GlcNAc...) asparagine glycosylation. Cysteines 253 and 284 form a disulfide. The helical transmembrane segment at Leu299–Leu321 threads the bilayer. Residues Arg322–Phe350 lie on the Cytoplasmic side of the membrane. Residues Val351–Met371 form a helical membrane-spanning segment. The Extracellular segment spans residues Lys372–Ser382. The chain crosses the membrane as a helical span at residues Tyr383–Leu405. The Cytoplasmic portion of the chain corresponds to Thr406 to Arg427. Residues Phe428–Gly448 traverse the membrane as a helical segment. Residues Pro449–Ser456 are Extracellular-facing. Residues Leu457 to Phe477 constitute an intramembrane region (pore-forming). The short motif at Asn469–Phe474 is the Selectivity filter element. Topologically, residues Ala478–Trp491 are extracellular. The helical transmembrane segment at Leu492–Phe513 threads the bilayer. Over Ile514–Asn580 the chain is Cytoplasmic. Phosphoserine; by PAK is present on residues Ser557 and Ser559. The tract at residues Cys565 to Cys567 is required for palmitoylation and association with membranes. The Dileucine internalization motif; mediates AP2 complex-dependent internalization signature appears at Glu573–Leu578.

This sequence belongs to the transient receptor (TC 1.A.4) family. Polycystin subfamily. MCOLN1 sub-subfamily. In terms of assembly, homotetramer. Homooligomer. Can heterooligomerize with MCOLN2 or MCOLN3; heteromeric assemblies have different channel properties as compared to the respective homooligomers and may be tissue-specific. Interacts with PDCD6. Interacts with TMEM163. Interacts with LAPTM4B. Post-translationally, palmitoylated; involved in association with membranes. In terms of processing, phosphorylation by PKA inhibits channel activity. Dephosphorylation increases activity. Proteolytically cleaved probably involving multiple lysosomal proteases including cathepsin B; inhibits lysosomal channel activity. As to expression, widely expressed in adult and fetal tissues.

It is found in the late endosome membrane. The protein resides in the lysosome membrane. Its subcellular location is the cytoplasmic vesicle membrane. The protein localises to the cell projection. It localises to the phagocytic cup. It is found in the cytoplasmic vesicle. The protein resides in the phagosome membrane. Its subcellular location is the cell membrane. The enzyme catalyses Ca(2+)(in) = Ca(2+)(out). It carries out the reaction Fe(2+)(in) = Fe(2+)(out). It catalyses the reaction Mg(2+)(in) = Mg(2+)(out). The catalysed reaction is K(+)(in) = K(+)(out). The enzyme catalyses Na(+)(in) = Na(+)(out). Its activity is regulated as follows. Channel activity is controlled by multiple regulatory mechanisms in different subcellular compartments. Channel function is transiently modulated by changes in Ca(2+) in a pH-dependent manner; pH changes modify the aggregation state of unitary channels; a negative cooperativity between extracellular/lumenal Ca(2+) and H(+) is suggested. Regulated by phosphoinositides in a compartment-specific manner: in lysosomes activated by PtdIns(3,5)P2 (Phosphatidylinositol 3,5-bisphosphate) and at the plasma membrane inhibited by PtdIns(4,5)P2 (Phosphatidylinositol 4,5-bisphosphate). In terms of biological role, nonselective cation channel probably playing a role in the regulation of membrane trafficking events and of metal homeostasis. Acts as a Ca(2+)-permeable cation channel with inwardly rectifying activity. Proposed to play a major role in Ca(2+) release from late endosome and lysosome vesicles to the cytoplasm, which is important for many lysosome-dependent cellular events, including the fusion and trafficking of these organelles, exocytosis and autophagy. Required for efficient uptake of large particles in macrophages in which Ca(2+) release from the lysosomes triggers lysosomal exocytosis. May also play a role in phagosome-lysosome fusion. Involved in lactosylceramide trafficking indicative for a role in the regulation of late endocytic membrane fusion/fission events. By mediating lysosomal Ca(2+) release is involved in regulation of mTORC1 signaling and in mTOR/TFEB-dependent lysosomal adaptation to environmental cues such as nutrient levels. Seems to act as lysosomal active oxygen species (ROS) sensor involved in ROS-induced TFEB activation and autophagy. Also functions as a Fe(2+) permeable channel in late endosomes and lysosomes. Also permeable to Mg(2+), Na(+). K(+) and Cs(+). Proposed to play a role in zinc homeostasis probably implicating its association with TMEM163 In adaptive immunity, TRPML2 and TRPML1 may play redundant roles in the function of the specialized lysosomes of B cells. Its function is as follows. May contribute to cellular lipase activity within the late endosomal pathway or at the cell surface which may be involved in processes of membrane reshaping and vesiculation, especially the growth of tubular structures. However, it is not known, whether it conveys the enzymatic activity directly, or merely facilitates the activity of an associated phospholipase. In Homo sapiens (Human), this protein is Mucolipin-1.